Consider the following 83-residue polypeptide: Small ribosomal subunit protein uS17 (83 aa).

Belongs to the universal ribosomal protein uS17 family. In terms of assembly, part of the 30S ribosomal subunit.

Its function is as follows. One of the primary rRNA binding proteins, it binds specifically to the 5'-end of 16S ribosomal RNA. The chain is Small ribosomal subunit protein uS17 from Chlamydia muridarum (strain MoPn / Nigg).